The sequence spans 285 residues: Pantothenate synthetase (285 aa).

30-37 (MGFLHEGH) contributes to the ATP binding site. Histidine 37 serves as the catalytic Proton donor. Position 61 (glutamine 61) interacts with (R)-pantoate. Position 61 (glutamine 61) interacts with beta-alanine. 147–150 (GQKD) is a binding site for ATP. Glutamine 153 serves as a coordination point for (R)-pantoate. Residues valine 176 and 184–187 (KSSR) contribute to the ATP site.

The protein belongs to the pantothenate synthetase family. In terms of assembly, homodimer.

It is found in the cytoplasm. The enzyme catalyses (R)-pantoate + beta-alanine + ATP = (R)-pantothenate + AMP + diphosphate + H(+). It participates in cofactor biosynthesis; (R)-pantothenate biosynthesis; (R)-pantothenate from (R)-pantoate and beta-alanine: step 1/1. Its function is as follows. Catalyzes the condensation of pantoate with beta-alanine in an ATP-dependent reaction via a pantoyl-adenylate intermediate. This is Pantothenate synthetase from Listeria welshimeri serovar 6b (strain ATCC 35897 / DSM 20650 / CCUG 15529 / CIP 8149 / NCTC 11857 / SLCC 5334 / V8).